A 653-amino-acid polypeptide reads, in one-letter code: DNA-directed RNA polymerase III subunit rpc3 (653 aa).

Disordered regions lie at residues 131-181 (PSNS…YTSS), 266-285 (PRGA…NKKA), 293-312 (DEDE…FGED), and 412-444 (VSQP…SDGN). Positions 138–169 (RASEERGGIHETEEYHGEEARQETEEHRETEG) are enriched in basic and acidic residues. Over residues 293-311 (DEDEDGGEENEWSDDDFGE) the composition is skewed to acidic residues. Positions 580 to 601 (TYKAMSRCLQRLRFERSRLKEF) are leucine-zipper.

Belongs to the RNA polymerase beta chain family. Component of the RNA polymerase III (Pol III) complex consisting of 17 subunits.

The protein localises to the nucleus. Its function is as follows. DNA-dependent RNA polymerase catalyzes the transcription of DNA into RNA using the four ribonucleoside triphosphates as substrates. Specific core component of RNA polymerase III which synthesizes small RNAs, such as 5S rRNA and tRNAs. This is DNA-directed RNA polymerase III subunit rpc3 (rpc82) from Aspergillus oryzae (strain ATCC 42149 / RIB 40) (Yellow koji mold).